A 367-amino-acid polypeptide reads, in one-letter code: tRNA/tmRNA (uracil-C(5))-methyltransferase (367 aa).

5 residues coordinate S-adenosyl-L-methionine: glutamine 190, tyrosine 218, asparagine 223, glutamate 239, and aspartate 299. Catalysis depends on cysteine 324, which acts as the Nucleophile. Catalysis depends on glutamate 358, which acts as the Proton acceptor.

This sequence belongs to the class I-like SAM-binding methyltransferase superfamily. RNA M5U methyltransferase family. TrmA subfamily.

It catalyses the reaction uridine(54) in tRNA + S-adenosyl-L-methionine = 5-methyluridine(54) in tRNA + S-adenosyl-L-homocysteine + H(+). The catalysed reaction is uridine(341) in tmRNA + S-adenosyl-L-methionine = 5-methyluridine(341) in tmRNA + S-adenosyl-L-homocysteine + H(+). In terms of biological role, dual-specificity methyltransferase that catalyzes the formation of 5-methyluridine at position 54 (m5U54) in all tRNAs, and that of position 341 (m5U341) in tmRNA (transfer-mRNA). This Erwinia tasmaniensis (strain DSM 17950 / CFBP 7177 / CIP 109463 / NCPPB 4357 / Et1/99) protein is tRNA/tmRNA (uracil-C(5))-methyltransferase.